Consider the following 232-residue polypeptide: Protein lin-7 homolog A (232 aa).

A Kinase interacting site motif is present at residues Met-14–Asp-28. Positions Leu-25 to Gly-80 constitute an L27 domain. Residues Val-108–Pro-190 enclose the PDZ domain.

This sequence belongs to the lin-7 family. Forms a complex with CASK and CASKIN1. Component of the brain-specific heterotrimeric complex (LIN-10-LIN-2-LIN-7 complex) composed of at least APBA1, CASK, and LIN7, which associates with the motor protein KIF17 to transport vesicles along microtubules. Can also interact with other modular proteins containing protein-protein interaction domains like PALS1, PALS2, MPP7, DLG1, DLG2 and DLG3 through its L27 domain. Interacts with DLG4 and GRIN2B as well as CDH1 and CTNNB1, the channels KCNJ12/Kir2.2, KCNJ4/Kir2.3 and probably KCNJ2/Kir2.1 and SLC6A12/BGT-1 via its PDZ domain. The association of LIN7A with cadherin and beta-catenin is calcium-dependent, occurs at synaptic junctions and requires the actin cytoskeleton. Interacts with EGFR, ERBB2, ERBB3 and ERBB4 with both PDZ and KID domains. Associates with KIF17 via APBA1. Interacts with HTR4. Forms a tripartite complex composed of DLG1, MPP7 and LIN7 (LIN7A or LIN7C). Interacts with MARCHF11. Ubiquitously expressed in brain and detected in lung, liver and testis (at protein level). Expression was detected only in brain.

It is found in the cell membrane. The protein resides in the basolateral cell membrane. The protein localises to the cell junction. It localises to the postsynaptic density membrane. Its subcellular location is the tight junction. Functionally, plays a role in establishing and maintaining the asymmetric distribution of channels and receptors at the plasma membrane of polarized cells. Forms membrane-associated multiprotein complexes that may regulate delivery and recycling of proteins to the correct membrane domains. The tripartite complex composed of LIN7 (LIN7A, LIN7B or LIN7C), CASK and APBA1 associates with the motor protein KIF17 to transport vesicles containing N-methyl-D-aspartate (NMDA) receptor subunit NR2B along microtubules. This complex may have the potential to couple synaptic vesicle exocytosis to cell adhesion in brain. Ensures the proper localization of GRIN2B (subunit 2B of the NMDA receptor) to neuronal postsynaptic density and may function in localizing synaptic vesicles at synapses where it is recruited by beta-catenin and cadherin. Required to localize Kir2 channels, GABA transporter (SLC6A12) and EGFR/ERBB1, ERBB2, ERBB3 and ERBB4 to the basolateral membrane of epithelial cells. The sequence is that of Protein lin-7 homolog A (Lin7a) from Rattus norvegicus (Rat).